We begin with the raw amino-acid sequence, 211 residues long: Probable nicotinate-nucleotide adenylyltransferase (211 aa).

This sequence belongs to the NadD family.

It carries out the reaction nicotinate beta-D-ribonucleotide + ATP + H(+) = deamido-NAD(+) + diphosphate. Its pathway is cofactor biosynthesis; NAD(+) biosynthesis; deamido-NAD(+) from nicotinate D-ribonucleotide: step 1/1. In terms of biological role, catalyzes the reversible adenylation of nicotinate mononucleotide (NaMN) to nicotinic acid adenine dinucleotide (NaAD). This Legionella pneumophila (strain Paris) protein is Probable nicotinate-nucleotide adenylyltransferase.